The primary structure comprises 113 residues: Ribulose bisphosphate carboxylase small subunit (113 aa).

Belongs to the RuBisCO small chain family. Heterohexadecamer of 8 large and 8 small subunits. Forms a CsoS2-CsoS1-RuBisCO complex.

It localises to the carboxysome. RuBisCO catalyzes two reactions: the carboxylation of D-ribulose 1,5-bisphosphate, the primary event in carbon dioxide fixation, as well as the oxidative fragmentation of the pentose substrate in the photorespiration process. Both reactions occur simultaneously and in competition at the same active site. Although the small subunit is not catalytic it is essential for maximal activity. This Prochlorococcus marinus (strain MIT 9313) protein is Ribulose bisphosphate carboxylase small subunit.